A 130-amino-acid chain; its full sequence is Small ribosomal subunit protein uS11c (130 aa).

Belongs to the universal ribosomal protein uS11 family. In terms of assembly, part of the 30S ribosomal subunit.

It is found in the plastid. It localises to the chloroplast. This is Small ribosomal subunit protein uS11c from Pinus koraiensis (Korean pine).